The primary structure comprises 357 residues: Olfactory receptor 2B2 (357 aa).

At 1–25 (MNWVNKSVPQEFILLVFSDQPWLEI) the chain is on the extracellular side. The N-linked (GlcNAc...) asparagine glycan is linked to Asn5. A helical membrane pass occupies residues 26–49 (PPFVMFLFSYILTIFGNLTIILVS). The Cytoplasmic segment spans residues 50 to 57 (HVDFKLHT). The chain crosses the membrane as a helical span at residues 58 to 79 (PMYFFLSNLSLLDLCYTTSTVP). Topologically, residues 80 to 100 (QMLVNICNTRKVISYGGCVAQ) are extracellular. Cys97 and Cys189 form a disulfide bridge. Residues 101 to 120 (LFIFLALGSTECLLLAVMCF) form a helical membrane-spanning segment. The Cytoplasmic segment spans residues 121–139 (DRFVAICRPLHYSIIMHQR). A helical membrane pass occupies residues 140-158 (LCFQLAAASWISGFSNSVL). Topologically, residues 159–195 (QSTWTLKMPLCGHKEVDHFFCEVPALLKLSCVDTTAN) are extracellular. The helical transmembrane segment at 196 to 219 (EAELFFISVLFLLIPVTLILISYA) threads the bilayer. The Cytoplasmic portion of the chain corresponds to 220 to 236 (FIVQAVLRIQSAEGQRK). Residues 237–259 (AFGTCGSHLIVVSLFYGTAISMY) traverse the membrane as a helical segment. At 260–272 (LQPPSPSSKDRGK) the chain is on the extracellular side. Residues 273-292 (MVSLFCGIIAPMLNPLIYTL) traverse the membrane as a helical segment. The Cytoplasmic segment spans residues 293–357 (RNKEVKEAFK…YCNLPQRKFP (65 aa)).

It belongs to the G-protein coupled receptor 1 family.

It is found in the cell membrane. In terms of biological role, odorant receptor. This is Olfactory receptor 2B2 (OR2B2) from Homo sapiens (Human).